A 362-amino-acid polypeptide reads, in one-letter code: Chalcone synthase A (362 aa).

Cys168 is an active-site residue.

Belongs to the thiolase-like superfamily. Chalcone/stilbene synthases family.

The catalysed reaction is (E)-4-coumaroyl-CoA + 3 malonyl-CoA + 3 H(+) = 2',4,4',6'-tetrahydroxychalcone + 3 CO2 + 4 CoA. Its pathway is secondary metabolite biosynthesis; flavonoid biosynthesis. Its function is as follows. The primary product of this enzyme is 4,2',4',6'-tetrahydroxychalcone (also termed naringenin-chalcone or chalcone) which can under specific conditions spontaneously isomerize into naringenin. This is Chalcone synthase A (CHSA) from Ipomoea trifida (Morning glory).